A 1240-amino-acid chain; its full sequence is ABC transporter B family member 17 (1240 aa).

The ABC transmembrane type-1 1 domain occupies 35–324 (MALGLIGAVG…SLSNLKYFSE (290 aa)). A helical membrane pass occupies residues 36–56 (ALGLIGAVGDGFITPVVVFIF). N-linked (GlcNAc...) asparagine glycosylation is present at Asn-70. Helical transmembrane passes span 81–101 (VVAL…EGYC), 158–180 (LPNF…ILMW), 184–206 (IVGF…ALVS), 264–284 (GITI…TWYG), and 296–316 (GTVF…GQSL). Residues 359-595 (VEFNHVKFTY…IDGQYTSLVS (237 aa)) enclose the ABC transporter 1 domain. 394-401 (GGSGSGKS) is an ATP binding site. Asn-542, Asn-609, and Asn-642 each carry an N-linked (GlcNAc...) asparagine glycan. In terms of domain architecture, ABC transmembrane type-1 2 spans 672 to 960 (ALYGCLSAAL…AGTMTTDLAR (289 aa)). The next 2 helical transmembrane spans lie at 681–701 (LVGV…SVFF) and 714–734 (IYVL…ISQH). Asn-769 is a glycosylation site (N-linked (GlcNAc...) asparagine). Helical transmembrane passes span 793 to 815 (MSLL…VIAW), 817 to 839 (LAIV…RVLL), 896 to 919 (WLAG…NFWY), and 923 to 943 (LIAD…IFVT). One can recognise an ABC transporter 2 domain in the interval 995 to 1233 (ITFLNVDFAY…GPTGTYFSLA (239 aa)). Asn-1015 is a glycosylation site (N-linked (GlcNAc...) asparagine). An ATP-binding site is contributed by 1030-1037 (GTSGSGKS).

This sequence belongs to the ABC transporter superfamily. ABCB family. Multidrug resistance exporter (TC 3.A.1.201) subfamily.

It is found in the membrane. The sequence is that of ABC transporter B family member 17 (ABCB17) from Arabidopsis thaliana (Mouse-ear cress).